A 184-amino-acid polypeptide reads, in one-letter code: ATP synthase subunit b, chloroplastic (184 aa).

Residues 27-49 (FATNPINLSVVLGVLIFFGKGVL) form a helical membrane-spanning segment.

It belongs to the ATPase B chain family. In terms of assembly, F-type ATPases have 2 components, F(1) - the catalytic core - and F(0) - the membrane proton channel. F(1) has five subunits: alpha(3), beta(3), gamma(1), delta(1), epsilon(1). F(0) has four main subunits: a(1), b(1), b'(1) and c(10-14). The alpha and beta chains form an alternating ring which encloses part of the gamma chain. F(1) is attached to F(0) by a central stalk formed by the gamma and epsilon chains, while a peripheral stalk is formed by the delta, b and b' chains.

The protein resides in the plastid. It localises to the chloroplast thylakoid membrane. In terms of biological role, f(1)F(0) ATP synthase produces ATP from ADP in the presence of a proton or sodium gradient. F-type ATPases consist of two structural domains, F(1) containing the extramembraneous catalytic core and F(0) containing the membrane proton channel, linked together by a central stalk and a peripheral stalk. During catalysis, ATP synthesis in the catalytic domain of F(1) is coupled via a rotary mechanism of the central stalk subunits to proton translocation. Component of the F(0) channel, it forms part of the peripheral stalk, linking F(1) to F(0). This Amborella trichopoda protein is ATP synthase subunit b, chloroplastic.